A 184-amino-acid chain; its full sequence is Peptidyl-tRNA hydrolase (184 aa).

Tyr14 is a tRNA binding site. His19 functions as the Proton acceptor in the catalytic mechanism. 2 residues coordinate tRNA: Phe60 and Asn62.

This sequence belongs to the PTH family. As to quaternary structure, monomer.

It localises to the cytoplasm. It catalyses the reaction an N-acyl-L-alpha-aminoacyl-tRNA + H2O = an N-acyl-L-amino acid + a tRNA + H(+). Its function is as follows. Hydrolyzes ribosome-free peptidyl-tRNAs (with 1 or more amino acids incorporated), which drop off the ribosome during protein synthesis, or as a result of ribosome stalling. In terms of biological role, catalyzes the release of premature peptidyl moieties from peptidyl-tRNA molecules trapped in stalled 50S ribosomal subunits, and thus maintains levels of free tRNAs and 50S ribosomes. In Mesomycoplasma hyopneumoniae (strain 7448) (Mycoplasma hyopneumoniae), this protein is Peptidyl-tRNA hydrolase.